The primary structure comprises 525 residues: GMP synthase [glutamine-hydrolyzing] (525 aa).

One can recognise a Glutamine amidotransferase type-1 domain in the interval 9-207 (RILILDFGSQ…VRDICQCEAL (199 aa)). Cysteine 86 acts as the Nucleophile in catalysis. Active-site residues include histidine 181 and glutamate 183. Residues 208–400 (WTPAKIIDDA…LGLPYDMLYR (193 aa)) form the GMPS ATP-PPase domain. 235–241 (SGGVDSS) is an ATP binding site.

In terms of assembly, homodimer.

It catalyses the reaction XMP + L-glutamine + ATP + H2O = GMP + L-glutamate + AMP + diphosphate + 2 H(+). The protein operates within purine metabolism; GMP biosynthesis; GMP from XMP (L-Gln route): step 1/1. Catalyzes the synthesis of GMP from XMP. This is GMP synthase [glutamine-hydrolyzing] from Escherichia coli O17:K52:H18 (strain UMN026 / ExPEC).